Consider the following 351-residue polypeptide: Photosystem II D2 protein (351 aa).

The chain crosses the membrane as a helical span at residues 39 to 59; sequence CAYMAIGGWLTGTTFATSWYT. Chlorophyll a is bound at residue His116. The chain crosses the membrane as a helical span at residues 123–139; it reads GFMLRQFEIARLVGVRP. Pheophytin a contacts are provided by Gln128 and Asn141. Residues 151-164 form a helical membrane-spanning segment; it reads LFVSVFLIYPLGQS. Residue His196 participates in chlorophyll a binding. A helical transmembrane segment spans residues 206-226; that stretch reads GALLCAIHGATVENTLFEDGD. 2 residues coordinate a plastoquinone: His213 and Phe260. His213 contributes to the Fe cation binding site. His267 provides a ligand contact to Fe cation. The chain crosses the membrane as a helical span at residues 277–293; it reads GLWMSAIGVVGLALNLR.

This sequence belongs to the reaction center PufL/M/PsbA/D family. As to quaternary structure, PSII is composed of 1 copy each of membrane proteins PsbA, PsbB, PsbC, PsbD, PsbE, PsbF, PsbH, PsbI, PsbJ, PsbK, PsbL, PsbM, PsbT, PsbX, PsbY, PsbZ, Psb30/Ycf12, peripheral proteins PsbO, CyanoQ (PsbQ), PsbU, PsbV and a large number of cofactors. It forms dimeric complexes. The cofactor is The D1/D2 heterodimer binds P680, chlorophylls that are the primary electron donor of PSII, and subsequent electron acceptors. It shares a non-heme iron and each subunit binds pheophytin, quinone, additional chlorophylls, carotenoids and lipids. There is also a Cl(-1) ion associated with D1 and D2, which is required for oxygen evolution. The PSII complex binds additional chlorophylls, carotenoids and specific lipids..

Its subcellular location is the cellular thylakoid membrane. It catalyses the reaction 2 a plastoquinone + 4 hnu + 2 H2O = 2 a plastoquinol + O2. In terms of biological role, photosystem II (PSII) is a light-driven water:plastoquinone oxidoreductase that uses light energy to abstract electrons from H(2)O, generating O(2) and a proton gradient subsequently used for ATP formation. It consists of a core antenna complex that captures photons, and an electron transfer chain that converts photonic excitation into a charge separation. The D1/D2 (PsbA/PsbD) reaction center heterodimer binds P680, the primary electron donor of PSII as well as several subsequent electron acceptors. D2 is needed for assembly of a stable PSII complex. This Prochlorothrix hollandica protein is Photosystem II D2 protein.